Here is a 99-residue protein sequence, read N- to C-terminus: Nucleoid-associated protein EbfC (99 aa).

Belongs to the YbaB/EbfC family. As to quaternary structure, homodimer.

It is found in the cytoplasm. The protein resides in the nucleoid. Binds to DNA and alters its conformation. May be involved in regulation of gene expression, nucleoid organization and DNA protection. This is Nucleoid-associated protein EbfC from Borrelia turicatae (strain 91E135).